The primary structure comprises 85 residues: Beta-insect depressant toxin Lqh-dprIT3b (85 aa).

The first 21 residues, 1-21 (MKLLLLLTISASMLIEGLVNA), serve as a signal peptide directing secretion. The 61-residue stretch at 22–82 (DGYIRGGDGC…EWDYETNTCG (61 aa)) folds into the LCN-type CS-alpha/beta domain. 4 disulfides stabilise this stretch: Cys-31–Cys-81, Cys-35–Cys-56, Cys-42–Cys-63, and Cys-46–Cys-65. Gly-82 is modified (glycine amide).

This sequence belongs to the long (4 C-C) scorpion toxin superfamily. Sodium channel inhibitor family. Beta subfamily. As to expression, expressed by the venom gland.

It is found in the secreted. Its function is as follows. Depressant insect beta-toxins cause a transient contraction paralysis followed by a slow flaccid paralysis. They bind voltage-independently at site-4 of sodium channels (Nav) and block action potentials, primarily by depolarizing the axonal membrane and suppressing the sodium current. This depressant toxin is active only on insects. It is found in a relatively small amount in the venom, and its activity on insects is 10-fold higher compared to other known depressant toxins. The sequence is that of Beta-insect depressant toxin Lqh-dprIT3b from Leiurus hebraeus (Hebrew deathstalker scorpion).